Consider the following 218-residue polypeptide: Thiopurine S-methyltransferase (218 aa).

Residues W10, L45, E66, and R123 each contribute to the S-adenosyl-L-methionine site.

It belongs to the class I-like SAM-binding methyltransferase superfamily. TPMT family.

Its subcellular location is the cytoplasm. It catalyses the reaction S-adenosyl-L-methionine + a thiopurine = S-adenosyl-L-homocysteine + a thiopurine S-methylether.. The sequence is that of Thiopurine S-methyltransferase from Xanthomonas axonopodis pv. citri (strain 306).